The following is a 418-amino-acid chain: Actin-related protein 3 (418 aa).

Belongs to the actin family. ARP3 subfamily. Component of the Arp2/3 complex composed of actr2/arp2, actr3/arp3, arpc1b, arpc2, arpc3, arpc4 and arpc5.

It is found in the cytoplasm. The protein resides in the cytoskeleton. Its subcellular location is the cell projection. The protein localises to the nucleus. Functionally, ATP-binding component of the Arp2/3 complex, a multiprotein complex that mediates actin polymerization upon stimulation by nucleation-promoting factor (NPF). The Arp2/3 complex mediates the formation of branched actin networks in the cytoplasm, providing the force for cell motility. Seems to contact the pointed end of the daughter actin filament. In addition to its role in the cytoplasmic cytoskeleton, the Arp2/3 complex also promotes actin polymerization in the nucleus, thereby regulating gene transcription and repair of damaged DNA. The Arp2/3 complex promotes homologous recombination (HR) repair in response to DNA damage by promoting nuclear actin polymerization, leading to drive motility of double-strand breaks (DSBs). The sequence is that of Actin-related protein 3 (actr3) from Takifugu rubripes (Japanese pufferfish).